The primary structure comprises 237 residues: Ribonuclease PH (237 aa).

Phosphate is bound by residues Arg-86 and 124–126 (GTR).

Belongs to the RNase PH family. In terms of assembly, homohexameric ring arranged as a trimer of dimers.

It carries out the reaction tRNA(n+1) + phosphate = tRNA(n) + a ribonucleoside 5'-diphosphate. Functionally, phosphorolytic 3'-5' exoribonuclease that plays an important role in tRNA 3'-end maturation. Removes nucleotide residues following the 3'-CCA terminus of tRNAs; can also add nucleotides to the ends of RNA molecules by using nucleoside diphosphates as substrates, but this may not be physiologically important. Probably plays a role in initiation of 16S rRNA degradation (leading to ribosome degradation) during starvation. The sequence is that of Ribonuclease PH from Shewanella oneidensis (strain ATCC 700550 / JCM 31522 / CIP 106686 / LMG 19005 / NCIMB 14063 / MR-1).